Consider the following 49-residue polypeptide: MRTKITLACTECKQRNYDSMKNKKNNPDRLEMNKYCRFCKKHTLHRETK.

The protein belongs to the bacterial ribosomal protein bL33 family.

The sequence is that of Large ribosomal subunit protein bL33 from Clostridium botulinum (strain Alaska E43 / Type E3).